The chain runs to 514 residues: Maturase K (514 aa).

It belongs to the intron maturase 2 family. MatK subfamily.

It localises to the plastid. The protein localises to the chloroplast. Its function is as follows. Usually encoded in the trnK tRNA gene intron. Probably assists in splicing its own and other chloroplast group II introns. This Acer palmatum (Japanese maple) protein is Maturase K.